Consider the following 230-residue polypeptide: uncharacterized protein (230 aa).

Positions 1-16 (MTCVNVCFFLFPPCHR) are cleaved as a signal peptide. 4 consecutive transmembrane segments (helical) span residues 27-47 (VDLL…IPLI), 118-138 (LFFF…FLFF), 150-170 (FPIL…LSFL), and 172-191 (SLSH…LRVF).

It localises to the cytoplasm. It is found in the nucleus membrane. This is an uncharacterized protein from Schizosaccharomyces pombe (strain 972 / ATCC 24843) (Fission yeast).